The chain runs to 190 residues: Pyridoxal 5'-phosphate synthase subunit PdxT (190 aa).

46-48 (GES) lines the L-glutamine pocket. The Nucleophile role is filled by cysteine 78. Residues arginine 106 and 135-136 (IR) each bind L-glutamine. Residues histidine 171 and glutamate 173 each act as charge relay system in the active site.

Belongs to the glutaminase PdxT/SNO family. In the presence of PdxS, forms a dodecamer of heterodimers. Only shows activity in the heterodimer.

It carries out the reaction aldehydo-D-ribose 5-phosphate + D-glyceraldehyde 3-phosphate + L-glutamine = pyridoxal 5'-phosphate + L-glutamate + phosphate + 3 H2O + H(+). The catalysed reaction is L-glutamine + H2O = L-glutamate + NH4(+). It participates in cofactor biosynthesis; pyridoxal 5'-phosphate biosynthesis. In terms of biological role, catalyzes the hydrolysis of glutamine to glutamate and ammonia as part of the biosynthesis of pyridoxal 5'-phosphate. The resulting ammonia molecule is channeled to the active site of PdxS. The polypeptide is Pyridoxal 5'-phosphate synthase subunit PdxT (Dictyoglomus turgidum (strain DSM 6724 / Z-1310)).